The sequence spans 198 residues: Single-stranded DNA cytosine deaminase (198 aa).

The short motif at 1 to 30 (MDSLLMNRRKFLYQFKNVRWAKGRRETYLC) is the Bipartite nuclear localization signal element. Positions 2 to 26 (DSLLMNRRKFLYQFKNVRWAKGRRE) are interaction with SUPT6H. The CMP/dCMP-type deaminase domain occupies 23–129 (GRRETYLCYV…KAEPEGLRRL (107 aa)). Thr27 is subject to Phosphothreonine; by PKA. At Ser38 the chain carries Phosphoserine; by PKA. The important for interaction with CTNNBL1 stretch occupies residues 39 to 42 (ATSF). His56 serves as a coordination point for Zn(2+). Glu58 serves as the catalytic Proton donor. Zn(2+)-binding residues include Cys87 and Cys90. Positions 88-116 (YDCARHVADFLRGNPNLSLRIFTARLYFC) are required for interaction with RNF126. Residues 183–198 (LYEVDDLRDAFRTLGL) carry the Nuclear export signal motif.

Belongs to the cytidine and deoxycytidylate deaminase family. As to quaternary structure, interacts with CTNNBL1; the interaction is important for the immunoglobulin switch activity of AICDA. Interacts (via its NLS) with KPNA1. Interacts with PKA/PRKACA and PRKAR1A/PKR1. Interacts with TRIM28 and NCL. Interacts with SUPT6H. Interacts with RNF126. Directly interacts with MCM3AP; this interaction may favor AICDA recruitment to immunoglobulin variable region genes, hence promoting somatic hypermutations. Requires Zn(2+) as cofactor. In terms of processing, ser-38 is the major site whereas Thr-27 is the minor site of phosphorylation. Phosphorylation regulates its class-switch recombination activity. Post-translationally, probably monoubiquitinated on several residues by RNF126. Strongly expressed in lymph nodes and tonsils.

Its subcellular location is the nucleus. It localises to the cytoplasm. The protein localises to the cytosol. It catalyses the reaction a 2'-deoxycytidine in single-stranded DNA + H2O + H(+) = a 2'-deoxyuridine in single-stranded DNA + NH4(+). Functionally, single-stranded DNA-specific cytidine deaminase. Involved in somatic hypermutation (SHM), gene conversion, and class-switch recombination (CSR) in B-lymphocytes by deaminating C to U during transcription of Ig-variable (V) and Ig-switch (S) region DNA. Required for several crucial steps of B-cell terminal differentiation necessary for efficient antibody responses. May also play a role in the epigenetic regulation of gene expression by participating in DNA demethylation. The polypeptide is Single-stranded DNA cytosine deaminase (AICDA) (Homo sapiens (Human)).